The sequence spans 500 residues: MATQVATPLSPSYTSELIIVCHHVLQHSPTPLTPHSLSFTQGFLLGQLSIALLIFFFIKFFIFGEPPSADDRSLHLNSLRRARTLAHQQSIKQLRTRSNSISLSLRHKDSRSIIRKGEETRGGPSIATILAKTYYNVKGHQPESLDWFNVLIAQTIAQLRADARQDDAILGSLTEVLNSGSKPDWIGEIKVNEIALGDEFPIFSNCRVMPAEDGFWYGPGTTGTEEGRLQARMDVDLSDVITIGIETTLNLNWPKPLSAVLPVALAVSIVRFSGTLALSFIPSSSPPSTSTTTPNPEHHRSNSTTSSSTSPPHRPTTLAFTFLDDYRLDLSVRSLVGSRSRLQDVPKIAQLIESRVHAWFDERAVEPRFQQIVLPSLWPRKHNTRGGATEDVEASEADLDEEVILEEEEEEEEDGGYTLPVPPQLRHPSAASTSLEAEGAKLREAEIRAGVRKQERPGMSRAQTSREEGVRYRPKPVSRTSEGWSGQKGMPGALAPGTFR.

Over 1–42 (MATQVATPLSPSYTSELIIVCHHVLQHSPTPLTPHSLSFTQG) the chain is Lumenal. Residues 43–63 (FLLGQLSIALLIFFFIKFFIF) form a helical membrane-spanning segment. At 64–500 (GEPPSADDRS…PGALAPGTFR (437 aa)) the chain is on the cytoplasmic side. Residues 141-375 (QPESLDWFNV…EPRFQQIVLP (235 aa)) enclose the SMP-LTD domain. Low complexity-rich tracts occupy residues 283-294 (SSSPPSTSTTTP) and 302-316 (NSTT…HRPT). 2 disordered regions span residues 283–316 (SSSP…HRPT) and 406–500 (EEEE…GTFR). Residues 406 to 415 (EEEEEEEEDG) show a composition bias toward acidic residues. Positions 438 to 471 (EGAKLREAEIRAGVRKQERPGMSRAQTSREEGVR) are enriched in basic and acidic residues.

The protein belongs to the MMM1 family. In terms of assembly, homodimer. Component of the ER-mitochondria encounter structure (ERMES) or MDM complex, composed of MMM1, MDM10, MDM12 and MDM34. An MMM1 homodimer associates with one molecule of MDM12 on each side in a pairwise head-to-tail manner, and the SMP-LTD domains of MMM1 and MDM12 generate a continuous hydrophobic tunnel for phospholipid trafficking.

It is found in the endoplasmic reticulum membrane. Functionally, component of the ERMES/MDM complex, which serves as a molecular tether to connect the endoplasmic reticulum (ER) and mitochondria. Components of this complex are involved in the control of mitochondrial shape and protein biogenesis, and function in nonvesicular lipid trafficking between the ER and mitochondria. The MDM12-MMM1 subcomplex functions in the major beta-barrel assembly pathway that is responsible for biogenesis of all outer membrane beta-barrel proteins, and acts in a late step after the SAM complex. The MDM10-MDM12-MMM1 subcomplex further acts in the TOM40-specific pathway after the action of the MDM12-MMM1 complex. Essential for establishing and maintaining the structure of mitochondria and maintenance of mtDNA nucleoids. This Phaeosphaeria nodorum (strain SN15 / ATCC MYA-4574 / FGSC 10173) (Glume blotch fungus) protein is Maintenance of mitochondrial morphology protein 1.